A 406-amino-acid polypeptide reads, in one-letter code: Cysteine desulfurase (406 aa).

At lysine 226 the chain carries N6-(pyridoxal phosphate)lysine. Cysteine 364 acts as the Cysteine persulfide intermediate in catalysis.

It belongs to the class-V pyridoxal-phosphate-dependent aminotransferase family. Csd subfamily. In terms of assembly, homodimer. Interacts with SufE and the SufBCD complex composed of SufB, SufC and SufD. The interaction with SufE is required to mediate the direct transfer of the sulfur atom from the S-sulfanylcysteine. Requires pyridoxal 5'-phosphate as cofactor.

It localises to the cytoplasm. It carries out the reaction (sulfur carrier)-H + L-cysteine = (sulfur carrier)-SH + L-alanine. The enzyme catalyses L-selenocysteine + AH2 = hydrogenselenide + L-alanine + A + H(+). Its pathway is cofactor biosynthesis; iron-sulfur cluster biosynthesis. Functionally, cysteine desulfurases mobilize the sulfur from L-cysteine to yield L-alanine, an essential step in sulfur metabolism for biosynthesis of a variety of sulfur-containing biomolecules. Component of the suf operon, which is activated and required under specific conditions such as oxidative stress and iron limitation. Acts as a potent selenocysteine lyase in vitro, that mobilizes selenium from L-selenocysteine. Selenocysteine lyase activity is however unsure in vivo. In Escherichia coli O17:K52:H18 (strain UMN026 / ExPEC), this protein is Cysteine desulfurase.